Here is a 100-residue protein sequence, read N- to C-terminus: High mobility group protein C (100 aa).

The HMG box DNA-binding region spans 12–80; that stretch reads PKRPLSAFFL…KYEKDMQAYE (69 aa). The interval 81-100 is disordered; that stretch reads KKYGKPEKQKKIKKNKKGSK. Residues 90 to 100 are compositionally biased toward basic residues; it reads KKIKKNKKGSK.

It localises to the nucleus. It is found in the chromosome. In Tetrahymena thermophila, this protein is High mobility group protein C.